Here is a 331-residue protein sequence, read N- to C-terminus: UPF0194 membrane protein YbhG (331 aa).

The signal sequence occupies residues 1–19; that stretch reads MKKPVVIGLAIAAIVAVIA. The stretch at 107 to 208 forms a coiled coil; sequence EEIAQAAAAV…LDLQDTTLIA (102 aa).

The protein belongs to the UPF0194 family.

The protein localises to the periplasm. This is UPF0194 membrane protein YbhG from Salmonella gallinarum (strain 287/91 / NCTC 13346).